The following is a 176-amino-acid chain: MDLPGPIHDFLLVFLGSGLLVGGLGVVLLPNPIFSAFSLGFVLVCISLLYILSNSHFVAAAQLLIYVGAINVLIIFAVMFMNDSEYSTDFNLWTVGDGITSLVCTTILFSLISTILDTSWYGVIWTTRLNQLLEQDLISNSQQIGIHLSTDFFLPFELISIILLVALVGAISVARQ.

A run of 5 helical transmembrane segments spans residues 10-30 (FLLV…VLLP), 32-52 (PIFS…LYIL), 61-81 (AQLL…VMFM), 92-112 (LWTV…FSLI), and 152-172 (FFLP…GAIS).

It belongs to the complex I subunit 6 family. NDH is composed of at least 16 different subunits, 5 of which are encoded in the nucleus.

The protein resides in the plastid. It is found in the chloroplast thylakoid membrane. It catalyses the reaction a plastoquinone + NADH + (n+1) H(+)(in) = a plastoquinol + NAD(+) + n H(+)(out). The enzyme catalyses a plastoquinone + NADPH + (n+1) H(+)(in) = a plastoquinol + NADP(+) + n H(+)(out). In terms of biological role, NDH shuttles electrons from NAD(P)H:plastoquinone, via FMN and iron-sulfur (Fe-S) centers, to quinones in the photosynthetic chain and possibly in a chloroplast respiratory chain. The immediate electron acceptor for the enzyme in this species is believed to be plastoquinone. Couples the redox reaction to proton translocation, and thus conserves the redox energy in a proton gradient. In Lobularia maritima (Sweet alyssum), this protein is NAD(P)H-quinone oxidoreductase subunit 6, chloroplastic (ndhG).